The following is a 123-amino-acid chain: Ribosome-binding factor A (123 aa).

The protein belongs to the RbfA family. As to quaternary structure, monomer. Binds 30S ribosomal subunits, but not 50S ribosomal subunits or 70S ribosomes.

It localises to the cytoplasm. In terms of biological role, one of several proteins that assist in the late maturation steps of the functional core of the 30S ribosomal subunit. Associates with free 30S ribosomal subunits (but not with 30S subunits that are part of 70S ribosomes or polysomes). Required for efficient processing of 16S rRNA. May interact with the 5'-terminal helix region of 16S rRNA. The chain is Ribosome-binding factor A from Ralstonia nicotianae (strain ATCC BAA-1114 / GMI1000) (Ralstonia solanacearum).